We begin with the raw amino-acid sequence, 396 residues long: Stearoyl-[acyl-carrier-protein] 9-desaturase 5, chloroplastic (396 aa).

The transit peptide at M1–R29 directs the protein to the chloroplast. Residues E137, E175, H178, E228, E261, and H264 each contribute to the Fe cation site.

This sequence belongs to the fatty acid desaturase type 2 family. Homodimer. Fe(2+) is required as a cofactor. Ubiquitously expressed with a preference in leaves, flowers and stems.

The protein localises to the plastid. It localises to the chloroplast stroma. It carries out the reaction octadecanoyl-[ACP] + 2 reduced [2Fe-2S]-[ferredoxin] + O2 + 2 H(+) = (9Z)-octadecenoyl-[ACP] + 2 oxidized [2Fe-2S]-[ferredoxin] + 2 H2O. Its pathway is lipid metabolism; fatty acid metabolism. Its function is as follows. Converts stearoyl-ACP to oleoyl-ACP by introduction of a cis double bond between carbons 9 and 10 of the acyl chain. The protein is Stearoyl-[acyl-carrier-protein] 9-desaturase 5, chloroplastic (S-ACP-DES5) of Arabidopsis thaliana (Mouse-ear cress).